We begin with the raw amino-acid sequence, 367 residues long: dTDP-4-amino-4,6-dideoxy-D-glucose transaminase (367 aa).

At lysine 184 the chain carries N6-(pyridoxal phosphate)lysine.

Belongs to the DegT/DnrJ/EryC1 family. Pyridoxal 5'-phosphate serves as cofactor.

It catalyses the reaction dTDP-4-amino-4,6-dideoxy-D-glucose + 2-oxoglutarate = dTDP-4-dehydro-6-deoxy-alpha-D-glucose + L-glutamate. It functions in the pathway bacterial outer membrane biogenesis; lipopolysaccharide biosynthesis. In terms of biological role, catalyzes the conversion of dTDP-4-dehydro-6-deoxy-D-glucose (dTDP-D-Glc4O) to dTDP-4-amino-4,6-dideoxy-D-glucose (dTDP-D-Qui4N). L-glutamine can also be used as amino donor. This Shigella dysenteriae protein is dTDP-4-amino-4,6-dideoxy-D-glucose transaminase (vioA).